A 54-amino-acid chain; its full sequence is ATP synthase protein 8 (54 aa).

Residues 13–32 (ITFTFVIITLMVYILSKYIL) form a helical membrane-spanning segment.

Belongs to the ATPase protein 8 family. In terms of assembly, F-type ATPases have 2 components, CF(1) - the catalytic core - and CF(0) - the membrane proton channel.

Its subcellular location is the mitochondrion membrane. Mitochondrial membrane ATP synthase (F(1)F(0) ATP synthase or Complex V) produces ATP from ADP in the presence of a proton gradient across the membrane which is generated by electron transport complexes of the respiratory chain. F-type ATPases consist of two structural domains, F(1) - containing the extramembraneous catalytic core and F(0) - containing the membrane proton channel, linked together by a central stalk and a peripheral stalk. During catalysis, ATP synthesis in the catalytic domain of F(1) is coupled via a rotary mechanism of the central stalk subunits to proton translocation. Part of the complex F(0) domain. Minor subunit located with subunit a in the membrane. This chain is ATP synthase protein 8 (atp-8), found in Neurospora crassa (strain ATCC 24698 / 74-OR23-1A / CBS 708.71 / DSM 1257 / FGSC 987).